We begin with the raw amino-acid sequence, 55 residues long: Large ribosomal subunit protein bL33 (55 aa).

Positions 1–11 (MAKGSREKIKL) are enriched in basic and acidic residues. The disordered stretch occupies residues 1 to 32 (MAKGSREKIKLESSASTGHFYTTSKNKRTKPE). Over residues 13-24 (SSASTGHFYTTS) the composition is skewed to polar residues.

Belongs to the bacterial ribosomal protein bL33 family.

This is Large ribosomal subunit protein bL33 from Polynucleobacter necessarius subsp. necessarius (strain STIR1).